We begin with the raw amino-acid sequence, 157 residues long: 2-C-methyl-D-erythritol 2,4-cyclodiphosphate synthase (157 aa).

The a divalent metal cation site is built by aspartate 9 and histidine 11. Residues 9 to 11 (DVH) and 35 to 36 (HS) contribute to the 4-CDP-2-C-methyl-D-erythritol 2-phosphate site. Position 43 (histidine 43) interacts with a divalent metal cation. 4-CDP-2-C-methyl-D-erythritol 2-phosphate contacts are provided by residues 57-59 (DIG), 62-66 (FPDTD), 101-107 (AEKPKMA), 133-136 (TTTE), phenylalanine 140, and arginine 143.

Belongs to the IspF family. Homotrimer. It depends on a divalent metal cation as a cofactor.

It carries out the reaction 4-CDP-2-C-methyl-D-erythritol 2-phosphate = 2-C-methyl-D-erythritol 2,4-cyclic diphosphate + CMP. It functions in the pathway isoprenoid biosynthesis; isopentenyl diphosphate biosynthesis via DXP pathway; isopentenyl diphosphate from 1-deoxy-D-xylulose 5-phosphate: step 4/6. In terms of biological role, involved in the biosynthesis of isopentenyl diphosphate (IPP) and dimethylallyl diphosphate (DMAPP), two major building blocks of isoprenoid compounds. Catalyzes the conversion of 4-diphosphocytidyl-2-C-methyl-D-erythritol 2-phosphate (CDP-ME2P) to 2-C-methyl-D-erythritol 2,4-cyclodiphosphate (ME-CPP) with a corresponding release of cytidine 5-monophosphate (CMP). This Listeria monocytogenes serotype 4b (strain F2365) protein is 2-C-methyl-D-erythritol 2,4-cyclodiphosphate synthase.